We begin with the raw amino-acid sequence, 188 residues long: Peptidyl-tRNA hydrolase (188 aa).

Position 15 (Phe-15) interacts with tRNA. Catalysis depends on His-20, which acts as the Proton acceptor. The tRNA site is built by Tyr-64, Asn-66, and Asn-112.

Belongs to the PTH family. In terms of assembly, monomer.

It localises to the cytoplasm. The enzyme catalyses an N-acyl-L-alpha-aminoacyl-tRNA + H2O = an N-acyl-L-amino acid + a tRNA + H(+). Functionally, hydrolyzes ribosome-free peptidyl-tRNAs (with 1 or more amino acids incorporated), which drop off the ribosome during protein synthesis, or as a result of ribosome stalling. In terms of biological role, catalyzes the release of premature peptidyl moieties from peptidyl-tRNA molecules trapped in stalled 50S ribosomal subunits, and thus maintains levels of free tRNAs and 50S ribosomes. The protein is Peptidyl-tRNA hydrolase of Borrelia duttonii (strain Ly).